Reading from the N-terminus, the 291-residue chain is Phosphoribulokinase (291 aa).

12–20 (GSSGAGTTS) serves as a coordination point for ATP.

This sequence belongs to the phosphoribulokinase family. Homooctamer.

It carries out the reaction D-ribulose 5-phosphate + ATP = D-ribulose 1,5-bisphosphate + ADP + H(+). Its pathway is carbohydrate biosynthesis; Calvin cycle. In Xanthobacter flavus, this protein is Phosphoribulokinase (cbbP).